Here is a 376-residue protein sequence, read N- to C-terminus: Rhodopsin (376 aa).

Topologically, residues 1–52 (MSSWSNQPAMDDYGLPSSNPYGNFTVVDMAPKDILHMIHPHWYQYPPMNPMM) are extracellular. N-linked (GlcNAc...) asparagine glycosylation occurs at N23. A helical membrane pass occupies residues 53 to 77 (YPLLLIFMLFTGILCLAGNFVTIWV). Residues 78–89 (FMNTKSLRTPAN) lie on the Cytoplasmic side of the membrane. A helical transmembrane segment spans residues 90–112 (LLVVNLAMSDFLMMFTMFPPMMV). Residues 113–126 (TCYYHTWTLGPTFC) lie on the Extracellular side of the membrane. An intrachain disulfide couples C126 to C203. The chain crosses the membrane as a helical span at residues 127-149 (QVYAFLGNLCGCASIWTMVFITF). The 'Ionic lock' involved in activated form stabilization signature appears at 150–152 (DRY). The Cytoplasmic portion of the chain corresponds to 150–168 (DRYNVIVKGVAGEPLSTKK). Residues 169–189 (ASLWILTIWVLSITWCIAPFF) form a helical membrane-spanning segment. Residues 190 to 216 (GWNRYVPEGNLTGCGTDYLSEDILSRS) lie on the Extracellular side of the membrane. Residue N199 is glycosylated (N-linked (GlcNAc...) asparagine). The helical transmembrane segment at 217–237 (YLYDYSTWVYYLPLLPIYCYV) threads the bilayer. Residues 238–278 (SIIKAVAAHEKGMRDQAKKMGIKSLRNEEAQKTSAECRLAK) are Cytoplasmic-facing. Residues 279 to 300 (IAMTTVALWFIAWTPYLLINWV) form a helical membrane-spanning segment. Topologically, residues 301–311 (GMFARSYLSPV) are extracellular. The chain crosses the membrane as a helical span at residues 312–333 (YTIWGYVFAKANAVYNPIVYAI). Position 321 is an N6-(retinylidene)lysine (K321). The Cytoplasmic segment spans residues 334 to 376 (SHPKYRAAMEKKLPCLSCKTESDDVSESASTTTSSAEEKAESA). A disordered region spans residues 353 to 376 (TESDDVSESASTTTSSAEEKAESA).

It belongs to the G-protein coupled receptor 1 family. Opsin subfamily. Homodimer. Interacts with GNAQ. Contains one covalently linked retinal chromophore. In terms of tissue distribution, detected on rhabdomere membranes on photoreceptor cells in the retina (at protein level).

Its subcellular location is the cell projection. It localises to the rhabdomere membrane. Its function is as follows. Photoreceptor required for image-forming vision at low light intensity. Can use both retinal and 3-dehydroretinal as visual pigment. Light-induced isomerization of 11-cis to all-trans retinal triggers a conformational change that activates signaling via G-proteins. Signaling via GNAQ probably mediates the activation of phospholipase C. The polypeptide is Rhodopsin (RHO) (Procambarus clarkii (Red swamp crayfish)).